Here is a 414-residue protein sequence, read N- to C-terminus: Procollagen C-endopeptidase enhancer 2 (414 aa).

The N-terminal stretch at 1-22 (MGGASACIPLCLLLATARMARP) is a signal peptide. 7 disulfide bridges follow: Cys32–Cys58, Cys85–Cys106, Cys153–Cys180, Cys207–Cys230, Cys296–Cys363, Cys300–Cys366, and Cys311–Cys414. 2 CUB domains span residues 32 to 143 (CGGI…YSAA) and 153 to 267 (CGGR…YKFR). Positions 296-414 (CQQKCRRMGT…PMNALKNKQC (119 aa)) constitute an NTR domain. N-linked (GlcNAc...) asparagine glycosylation occurs at Asn354.

As to quaternary structure, interacts with heparin with high affinity, and type I or II collagen. In terms of processing, O-glycosylated; contains sialic acid.

The protein localises to the secreted. In terms of biological role, binds to the C-terminal propeptide of types I and II procollagens and may enhance the cleavage of that propeptide by BMP1. The protein is Procollagen C-endopeptidase enhancer 2 (Pcolce2) of Mus musculus (Mouse).